The sequence spans 802 residues: Endoplasmin (802 aa).

A signal peptide spans 1 to 21; sequence MRVLWVLGLCCVLLTFGFVRA. Residues 42 to 44 carry the SRT pseudosubstrate motif motif; the sequence is SRT. The N-linked (GlcNAc...) asparagine glycan is linked to Asn-62. Ser-64 bears the Phosphoserine mark. Asn-107 carries N-linked (GlcNAc...) asparagine glycosylation. ATP contacts are provided by Asn-107, Asp-149, and Asn-162. At Lys-168 the chain carries N6-(2-hydroxyisobutyryl)lysine. Ser-172 bears the Phosphoserine mark. Phe-199 provides a ligand contact to ATP. An N-linked (GlcNAc...) asparagine glycan is attached at Asn-217. The span at 290–317 shows a compositional bias: acidic residues; that stretch reads EEPLEEDEAAKEEKEESDDEAAVEEEEE. The segment at 290–323 is disordered; that stretch reads EEPLEEDEAAKEEKEESDDEAAVEEEEEEKKPKT. Phosphoserine occurs at positions 306 and 403. Lys-404 is subject to N6-succinyllysine. N-linked (GlcNAc...) asparagine glycosylation occurs at Asn-445. Ser-447 bears the Phosphoserine mark. An N6-acetyllysine modification is found at Lys-479. N-linked (GlcNAc...) asparagine glycosylation is found at Asn-481 and Asn-502. Residue Lys-633 is modified to N6-succinyllysine. The segment at 749 to 802 is disordered; it reads IDPEAQVEEEPEEEPEDTSEDAEDSEQDEGEEMDAGTEEEEEETEKESTEKDEL. The segment covering 753 to 793 has biased composition (acidic residues); sequence AQVEEEPEEEPEDTSEDAEDSEQDEGEEMDAGTEEEEEETE. Residue Thr-785 is modified to Phosphothreonine. The Prevents secretion from ER signature appears at 799-802; that stretch reads KDEL.

This sequence belongs to the heat shock protein 90 family. In terms of assembly, homodimer; disulfide-linked. Component of an EIF2 complex at least composed of CELF1/CUGBP1, CALR, CALR3, EIF2S1, EIF2S2, HSP90B1 and HSPA5. Part of a large chaperone multiprotein complex comprising DNAJB11, HSP90B1, HSPA5, HYOU, PDIA2, PDIA4, PDIA6, PPIB, SDF2L1, UGGT1 and very small amounts of ERP29, but not, or at very low levels, CALR nor CANX. Hyperglycosylated form interacts with OS9; promoting its degradation by the endoplasmic reticulum associated degradation (ERAD). Interacts with AIMP1; regulates its retention in the endoplasmic reticulum. Interacts with CNPY3; this interaction is disrupted in the presence of ATP. Interacts with TLR4, TLR9 and TLR11, but not with TLR3. Interacts with MZB1 in a calcium-dependent manner. Interacts with METTL23. Interacts with IL1B; the interaction facilitates cargo translocation into the ERGIC. Interacts with EIF2AK3. Post-translationally, phosphorylated by CK2. In terms of processing, N-glycosylated cotranslationally at Asn-217 by STT3A-containing OST-A complex: this glycosylation is constitutive. In response to various stress, 5 additional facultative sites (Asn-62, Asn-107, Asn-445, Asn-481 and Asn-502) can be glycosylated post-translationally by STT3B-containing OST-B complex, leading to a hyperglycosylated form that is degraded by the ER-associated degradation (ERAD) pathway. In normal conditions, the OST-A complex together with CCDC134 prevent glycosylation at facultative sites during protein folding, thereby preventing hyperglycosylation. Mechanistically, nascent HSP90B1 is tethered during translation to a specialized CCDC134-containing translocon that forms a microenvironment for its folding, in which STT3A associates with the SRT pseudosubstrate motif, and prevents access to facultative glycosylation sites until folding is completed, rendering its facultative sites inaccessible to the OST-B complex.

The protein resides in the endoplasmic reticulum lumen. The protein localises to the sarcoplasmic reticulum lumen. It localises to the melanosome. The enzyme catalyses ATP + H2O = ADP + phosphate + H(+). In terms of biological role, ATP-dependent chaperone involved in the processing of proteins in the endoplasmic reticulum, regulating their transport. Together with MESD, acts as a modulator of the Wnt pathway by promoting the folding of LRP6, a coreceptor of the canonical Wnt pathway. When associated with CNPY3, required for proper folding of Toll-like receptors. Promotes folding and trafficking of TLR4 to the cell surface. May participate in the unfolding of cytosolic leaderless cargos (lacking the secretion signal sequence) such as the interleukin 1/IL-1 to facilitate their translocation into the ERGIC (endoplasmic reticulum-Golgi intermediate compartment) and secretion; the translocation process is mediated by the cargo receptor TMED10. This Mus musculus (Mouse) protein is Endoplasmin (Hsp90b1).